The chain runs to 406 residues: Methyltransferase cfoD (406 aa).

Positions 270 and 312 each coordinate S-adenosyl-L-methionine. H315 (proton acceptor) is an active-site residue.

This sequence belongs to the class I-like SAM-binding methyltransferase superfamily. Cation-independent O-methyltransferase family.

Its pathway is secondary metabolite biosynthesis; flavonoid biosynthesis. Its function is as follows. Methyltransferase; part of the gene cluster that mediates the biosynthesis of chlorflavonin, a fungal flavonoid with acetolactate synthase inhibitory activity. Within the pathway, cfoD is responsible for the methylation at position C3-OH of flavonoid. The pathway begins with the PKS-NRPS hybrid synthetase cfoA that uses benzoic acid or p-hydroxybenzoic acid as a starter unit with four rounds of chain elongation using malonyl-CoA to form the chalcone skeleton. Then, a new type of chalcone isomerase, cfoK, catalyzes the conversion of the chalcone into a flavanone by a histidine-mediated oxa-Michael addition mechanism. The desaturation of flavanone to flavone is catalyzed by a new type of flavone synthase, the flavin mononucleotide (FMN)-dependent oxidoreductase cfoJ. Monooxygenases cfoF, cfoG, and P450 cfoH are responsible for the hydroxylation of the flavonoid skeleton at sites C3, C8, and C2', respectively. Like cfoF, the dehydratase cfoI also plays a role in the hydroxylation of position C3. Methyltransferases cfoB, cfoC, and cfoD then catalyze the methylation of C7-OH, C8-OH, and C3-OH, respectively. Finally, the monooxygenase cfoE is responsible for the chlorination of flavonoid at position C3'. In Aspergillus candidus, this protein is Methyltransferase cfoD.